We begin with the raw amino-acid sequence, 346 residues long: Methionine import ATP-binding protein MetN (346 aa).

An ABC transporter domain is found at 2 to 243; sequence VRFEGISKTY…PKHPITQSFL (242 aa). 40–47 contributes to the ATP binding site; sequence GRSGAGKS.

This sequence belongs to the ABC transporter superfamily. Methionine importer (TC 3.A.1.24) family. In terms of assembly, the complex is composed of two ATP-binding proteins (MetN), two transmembrane proteins (MetI) and a solute-binding protein (MetQ).

The protein localises to the cell inner membrane. It catalyses the reaction L-methionine(out) + ATP + H2O = L-methionine(in) + ADP + phosphate + H(+). It carries out the reaction D-methionine(out) + ATP + H2O = D-methionine(in) + ADP + phosphate + H(+). In terms of biological role, part of the ABC transporter complex MetNIQ involved in methionine import. Responsible for energy coupling to the transport system. The chain is Methionine import ATP-binding protein MetN from Bradyrhizobium diazoefficiens (strain JCM 10833 / BCRC 13528 / IAM 13628 / NBRC 14792 / USDA 110).